Consider the following 458-residue polypeptide: ATP synthase subunit beta (458 aa).

An ATP-binding site is contributed by 148–155 (GGAGVGKT).

Belongs to the ATPase alpha/beta chains family. As to quaternary structure, F-type ATPases have 2 components, CF(1) - the catalytic core - and CF(0) - the membrane proton channel. CF(1) has five subunits: alpha(3), beta(3), gamma(1), delta(1), epsilon(1). CF(0) has three main subunits: a(1), b(2) and c(9-12). The alpha and beta chains form an alternating ring which encloses part of the gamma chain. CF(1) is attached to CF(0) by a central stalk formed by the gamma and epsilon chains, while a peripheral stalk is formed by the delta and b chains.

The protein localises to the cell inner membrane. It catalyses the reaction ATP + H2O + 4 H(+)(in) = ADP + phosphate + 5 H(+)(out). Its function is as follows. Produces ATP from ADP in the presence of a proton gradient across the membrane. The catalytic sites are hosted primarily by the beta subunits. This chain is ATP synthase subunit beta, found in Mannheimia succiniciproducens (strain KCTC 0769BP / MBEL55E).